Consider the following 2083-residue polypeptide: Centriole proteome protein 16 (2083 aa).

Residues 205–333 (DAPTMDFMPP…PAVPPPLSPS (129 aa)) form a disordered region. Residues 227–245 (TAETADTAGAAGRKSLSGA) are compositionally biased toward low complexity. Gly residues predominate over residues 246-258 (SAGGAGPAKGGAK). 2 stretches are compositionally biased toward low complexity: residues 259-274 (AGAAAGGKRAVSSAGA) and 283-292 (GSTAGAATPG). Residues 302-315 (GEEDFEDDLSEDLD) are compositionally biased toward acidic residues. Residues 319–331 (PLPPSPAVPPPLS) are compositionally biased toward pro residues. WD repeat units follow at residues 482 to 523 (GHTA…CLAI), 526 to 569 (AHAS…AAGG), 579 to 620 (ATEY…GTSV), 689 to 726 (LHAAAINCLVVSDGLVLTGGDDRLLRAWPLDFRDYLLE), 728 to 767 (EHEGAVTGLAMSTDALRLAVGTENGTLGVLAIPTHAYTTL), 770 to 809 (SHCGAVNAVAVDPNRDQYCTVSSDGTLRIWHLATHQQLYE), 812 to 853 (APGE…LLQE), 856 to 895 (QHRAGITELLFSPGGDRLFSGGADGALVVYDTARMYAPAQ), 990 to 1029 (VSPLELTALCLDPAGRYAATAGADGLLRLWGCVPLPALRG), and 1041 to 1079 (GHPSAILGAAFHRSGYLVTVGDADCVCVWRVNADHMQQE). Disordered stretches follow at residues 1113–1141 (HTQATGALDPTDPRSRAHPSTALGPVASA) and 1225–1276 (ALVV…PPPP). The segment covering 1263–1276 (VPLPPSPQPLPPPP) has biased composition (pro residues). WD repeat units lie at residues 1326–1365 (GHNRPLSCLAASPDGALVAAGPAAAEPAFTEPAAGARAAQ), 1403–1444 (YHPL…LVAA), 1448–1486 (EQSPRAAAWLWGGHNPAFATAGADGLLLWTLQDNFLEQR), 1497–1539 (RDPR…QPPQ), 1651–1691 (GQAA…AEPA), 1736–1781 (DPLD…QLSW), and 1785–1824 (RHPAPVVGVAPHPRRGLVLSASSDGSLAVTDLSSTRLVSY). Residues 1713–1743 (APAHTLRHPPSAAPSSAASSSPLDPLDPLPA) form a disordered region. The segment covering 1720–1743 (HPPSAAPSSAASSSPLDPLDPLPA) has biased composition (low complexity). Residues 1832-1870 (GPTPHSPGGTGRRSPRGAASPPPAPPRPGTGPLQAMAVS) form a disordered region. The span at 1851–1860 (SPPPAPPRPG) shows a compositional bias: pro residues. A WD 18 repeat occupies 2035–2073 (GHAGAVAAASYTGDGGHAVTASGSVLMVWDAAQLLKGVT).

It belongs to the WD repeat WDR90/POC16 family.

The protein localises to the cytoplasm. The protein resides in the cytoskeleton. It is found in the microtubule organizing center. Its subcellular location is the centrosome. It localises to the centriole. Its function is as follows. Required for flagellum assembly and/or maintenance. The protein is Centriole proteome protein 16 of Chlamydomonas reinhardtii (Chlamydomonas smithii).